A 182-amino-acid polypeptide reads, in one-letter code: Troponin I, fast skeletal muscle (182 aa).

An N-acetylglycine modification is found at Gly2. Positions 2–48 are involved in binding TNC; the sequence is GDEEKRNRAITARRQHLKSVMLQIAATELEKEESRRESEKQNYLSEH. The residue at position 12 (Thr12) is a Phosphothreonine. The segment covering 29 to 41 has biased composition (basic and acidic residues); it reads ELEKEESRRESEK. The segment at 29 to 53 is disordered; sequence ELEKEESRRESEKQNYLSEHCPPLH. The tract at residues 97–117 is involved in binding TNC and actin; that stretch reads NQKLFDLRGKFKRPPLRRVRM. Ser118 bears the Phosphoserine mark.

The protein belongs to the troponin I family. As to quaternary structure, binds to actin and tropomyosin.

In terms of biological role, troponin I is the inhibitory subunit of troponin, the thin filament regulatory complex which confers calcium-sensitivity to striated muscle actomyosin ATPase activity. In Rattus norvegicus (Rat), this protein is Troponin I, fast skeletal muscle (Tnni2).